The following is a 294-amino-acid chain: Probable enoyl-CoA hydratase echA12 (294 aa).

It belongs to the enoyl-CoA hydratase/isomerase family.

The catalysed reaction is a (3S)-3-hydroxyacyl-CoA = a (2E)-enoyl-CoA + H2O. The enzyme catalyses a 4-saturated-(3S)-3-hydroxyacyl-CoA = a (3E)-enoyl-CoA + H2O. Could possibly oxidize fatty acids using specific components. The protein is Probable enoyl-CoA hydratase echA12 (echA12) of Mycobacterium leprae (strain TN).